We begin with the raw amino-acid sequence, 195 residues long: AP-4-A phosphorylase (195 aa).

Positions 1–17 (MSDEDRTDRATEDHTIF) are enriched in basic and acidic residues. Residues 1-20 (MSDEDRTDRATEDHTIFDRG) form a disordered region. The region spanning 57-166 (PFTEIPQLSD…VPRWGGDANF (110 aa)) is the HIT domain. Positions 151 to 155 (HLHVH) match the Histidine triad motif motif. The active-site Tele-AMP-histidine intermediate is the His153.

In terms of assembly, homotetramer. The cofactor is a divalent metal cation.

It carries out the reaction ADP + ATP + H(+) = P(1),P(4)-bis(5'-adenosyl) tetraphosphate + phosphate. In terms of biological role, catabolizes diadenosine 5',5'''-P1,P4-tetraphosphate (Ap4A) into ADP and ATP. This is AP-4-A phosphorylase from Mycobacterium tuberculosis (strain CDC 1551 / Oshkosh).